A 23-amino-acid chain; its full sequence is Unknown protein NF016 from 2D-PAGE (23 aa).

This chain is Unknown protein NF016 from 2D-PAGE, found in Naegleria fowleri (Brain eating amoeba).